The following is a 248-amino-acid chain: Small ribosomal subunit protein uS3 (248 aa).

A KH type-2 domain is found at 38-106 (IREFLSKGLD…QVALNILEVK (69 aa)). A compositionally biased stretch (basic and acidic residues) spans 214 to 230 (SEINAPAERRGRGDRNA). A disordered region spans residues 214–248 (SEINAPAERRGRGDRNARPRRGGQRRQRAEQKQEG).

Belongs to the universal ribosomal protein uS3 family. In terms of assembly, part of the 30S ribosomal subunit. Forms a tight complex with proteins S10 and S14.

In terms of biological role, binds the lower part of the 30S subunit head. Binds mRNA in the 70S ribosome, positioning it for translation. The sequence is that of Small ribosomal subunit protein uS3 from Corynebacterium glutamicum (strain R).